The chain runs to 373 residues: Alanine dehydrogenase (373 aa).

Residues Arg-15 and Lys-75 each contribute to the substrate site. Residue His-96 is the Proton donor/acceptor of the active site. NAD(+) is bound by residues Ser-134, 178–179, Asp-198, Ser-220, 239–240, 267–270, Arg-280, and 299–302; these read IV, VL, VAID, and VANI. Catalysis depends on Asp-270, which acts as the Proton donor/acceptor.

This sequence belongs to the AlaDH/PNT family. In terms of assembly, homohexamer. Trimer of dimer.

It localises to the cytoplasm. It carries out the reaction L-alanine + NAD(+) + H2O = pyruvate + NH4(+) + NADH + H(+). The protein operates within amino-acid degradation; L-alanine degradation via dehydrogenase pathway; NH(3) and pyruvate from L-alanine: step 1/1. In terms of biological role, catalyzes the reversible reductive amination of pyruvate to L-alanine. This enzyme is a key factor in the assimilation of L-alanine as an energy source through the tricarboxylic acid cycle. This Methanococcus maripaludis (strain DSM 14266 / JCM 13030 / NBRC 101832 / S2 / LL) protein is Alanine dehydrogenase.